The following is a 312-amino-acid chain: MTIKRKKVSVIGAGFTGATTAFLLAQKELADVVLVDIPQLENPTKGKALDMLEASPVQGFDANIIGTSDYADTADSDVVVITAGIARKPGMSRDDLVATNSKIMKSITRDIAKHSPNAIIVVLTNPVDAMTYSVFKEAGFPKERVIGQSGVLDTARFRTFIAQELNLSVKDITGFVLGGHGDDMVPLVRYSYAGGIPLETLIPKERLEAIVERTRKGGGEIVGLLGNGSAYYAPAASLVEMTEAILKDQRRILPAIAYLEGEYGYSDLYLGVPVILGGNGIEKIIELELLADEKEALDRSVESVRNVMKVLV.

Residues 12 to 17 (GAGFTG) and Asp36 contribute to the NAD(+) site. Substrate is bound by residues Arg87 and Arg93. NAD(+) contacts are provided by residues Asn100 and 123 to 125 (LTN). Asn125 contributes to the substrate binding site. The residue at position 149 (Ser149) is a Phosphoserine. Position 156 (Arg156) interacts with substrate. Catalysis depends on His180, which acts as the Proton acceptor.

This sequence belongs to the LDH/MDH superfamily. MDH type 3 family.

The catalysed reaction is (S)-malate + NAD(+) = oxaloacetate + NADH + H(+). In terms of biological role, catalyzes the reversible oxidation of malate to oxaloacetate. The chain is Malate dehydrogenase from Bacillus cereus (strain ATCC 14579 / DSM 31 / CCUG 7414 / JCM 2152 / NBRC 15305 / NCIMB 9373 / NCTC 2599 / NRRL B-3711).